A 70-amino-acid chain; its full sequence is uncharacterized protein (70 aa).

A helical membrane pass occupies residues 50 to 70 (INVVLVLIIALIIFILMLDGV).

Its subcellular location is the membrane. This is an uncharacterized protein from Dictyostelium discoideum (Social amoeba).